The sequence spans 580 residues: MTNHEQVLTDYLAAFIEELVQAGVKEAIISPGSRSTPLALMMAEHPILKIYVDVDERSAGFFALGLAKASKRPVVLLCTSGTAAANYFPAVAEANLSQIPLIVLTADRPHELRNVGAPQAMDQLHLYGSHVKDFTDMALPENSEEMLRYAKWHGSRAVDIAMKTPRGPVHLNFPLREPLVPILEPSPFTATGKKHHHVHIYYTHEVLDDSSIQKMVTECTGKKGVFVVGPIDKKELEQPMVDLAKKLGWPILADPLSGLRSYGALDEVVIDQYDAFLKEAEIMDKLTPEVVIRFGSMPVSKPLKNWLEQLSDIRFYVVDPGAAWKDPIKAVTDMIHCDERFLLDIMQQNMPDDAKDAAWLSRWTSYNKVAREIVLAEMANTTILEEGKIVAELRRLLPEKAGLFIGNSMPIRDVDTYFSQIDKKIKMLANRGANGIDGVVSSALGASVVFQPMFLLIGDLSFYHDMNGLLMAKKYKMNLTIVIVNNDGGGIFSFLPQANEPKYFESLFGTSTELDFRFAAAFYDADYHETQSVDELEEAIDKASYHKGLDIIEVKTNRHENKANHQALWAKIADALKALN.

It belongs to the TPP enzyme family. MenD subfamily. Homodimer. Mg(2+) serves as cofactor. The cofactor is Mn(2+). Requires thiamine diphosphate as cofactor.

The catalysed reaction is isochorismate + 2-oxoglutarate + H(+) = 5-enolpyruvoyl-6-hydroxy-2-succinyl-cyclohex-3-ene-1-carboxylate + CO2. It participates in quinol/quinone metabolism; 1,4-dihydroxy-2-naphthoate biosynthesis; 1,4-dihydroxy-2-naphthoate from chorismate: step 2/7. It functions in the pathway quinol/quinone metabolism; menaquinone biosynthesis. Its function is as follows. Catalyzes the thiamine diphosphate-dependent decarboxylation of 2-oxoglutarate and the subsequent addition of the resulting succinic semialdehyde-thiamine pyrophosphate anion to isochorismate to yield 2-succinyl-5-enolpyruvyl-6-hydroxy-3-cyclohexene-1-carboxylate (SEPHCHC). The sequence is that of 2-succinyl-5-enolpyruvyl-6-hydroxy-3-cyclohexene-1-carboxylate synthase from Listeria monocytogenes serovar 1/2a (strain ATCC BAA-679 / EGD-e).